Here is a 137-residue protein sequence, read N- to C-terminus: Altered inheritance of mitochondria protein 11 (137 aa).

2 helical membrane-spanning segments follow: residues 20-37 and 66-88; these read YGAA…SRAI and LTYA…CWAL.

Belongs to the AIM11 family.

It is found in the membrane. The chain is Altered inheritance of mitochondria protein 11 (AIM11) from Saccharomyces cerevisiae (strain YJM789) (Baker's yeast).